A 261-amino-acid chain; its full sequence is Complex I assembly factor TIMMDC1, mitochondrial (261 aa).

3 helical membrane-spanning segments follow: residues 67 to 87 (LNSVYQAGFLGFLIGAIYGGV), 131 to 151 (WGWRVGLFTTSYFGIITCMSV), and 183 to 203 (AGGIIGGFLGGVAGVTSLLLM).

The protein belongs to the Tim17/Tim22/Tim23 family. In terms of assembly, associates with complex I assembly intermediates during its biogenesis in a NdufAF3 and NdufAF4 dependent manner.

The protein localises to the membrane. In terms of biological role, chaperone protein involved in the assembly of the mitochondrial NADH:ubiquinone oxidoreductase complex (complex I). Essential for viability. In Drosophila melanogaster (Fruit fly), this protein is Complex I assembly factor TIMMDC1, mitochondrial.